The sequence spans 185 residues: Ribosome-recycling factor (185 aa).

This sequence belongs to the RRF family.

The protein localises to the cytoplasm. In terms of biological role, responsible for the release of ribosomes from messenger RNA at the termination of protein biosynthesis. May increase the efficiency of translation by recycling ribosomes from one round of translation to another. The polypeptide is Ribosome-recycling factor (Listeria welshimeri serovar 6b (strain ATCC 35897 / DSM 20650 / CCUG 15529 / CIP 8149 / NCTC 11857 / SLCC 5334 / V8)).